The chain runs to 727 residues: MLRIPVRKALVGLSKSPKGCVRTTATAASNLIEVFVDGQSVMVEPGTTVLQACEKVGMQIPRFCYHERLSVAGNCRMCLVEIEKAPKVVAACAMPVMKGWNILTNSEKSKKAREGVMEFLLANHPLDCPICDQGGECDLQDQSMMFGNDRSRFLEGKRAVEDKNIGPLVKTIMTRCIQCTRCIRFASEIAGVDDLGTTGRGNDMQVGTYIEKMFMSELSGNIIDICPVGALTSKPYAFTARPWETRKTESIDVMDAVGSNIVVSTRTGEVMRILPRMHEDINEEWISDKTRFAYDGLKRQRLTEPMIRNEKGLLTYTSWEDALSRVAGMLQSFQGKDVAAIAGGLVDAEALVALKDLLNRVDSDTLCTEEVFPTAGAGTDLRSNYLLNTTIAGVEEADVVLLVGTNPRFEVPLFNARIRKSWLHNDLKVALIGSPVDLTYRYDHLGDSPKILQDIASGSHPFSQVLKEAKKPMVVLGSSALQRNDGAAILAAVSSIAQKIRMTSGVTGDWKVMNILHRIASQVAALDLGYKPGVEAIRKNPPKVLFLLGADGGCITRQDLPKDCFIIYQGHHGDVGAPIADVILPGAAYTEKSATYVNTEGRAQQTKVAVTPPGLAREDWKIIRALSEIAGITLPYDTLDQVRNRLEEVSPNLVRYDDIEGANYFQQANELSKLVNQQLLADPLVPPQLTIKDFYMTDSISRASQTMAKCVKAVTEGAQAVEEPSIC.

The N-terminal 23 residues, 1 to 23 (MLRIPVRKALVGLSKSPKGCVRT), are a transit peptide targeting the mitochondrion. Residues 30–108 (NLIEVFVDGQ…GWNILTNSEK (79 aa)) form the 2Fe-2S ferredoxin-type domain. [2Fe-2S] cluster-binding residues include C64, C75, and C78. K84 is subject to N6-acetyllysine. C92 serves as a coordination point for [2Fe-2S] cluster. One can recognise a 4Fe-4S His(Cys)3-ligated-type domain in the interval 108 to 147 (KSKKAREGVMEFLLANHPLDCPICDQGGECDLQDQSMMFG). Positions 124, 128, 131, 137, 176, 179, 182, and 226 each coordinate [4Fe-4S] cluster. In terms of domain architecture, 4Fe-4S Mo/W bis-MGD-type spans 245–301 (TRKTESIDVMDAVGSNIVVSTRTGEVMRILPRMHEDINEEWISDKTRFAYDGLKRQR). N6-acetyllysine is present on residues K467, K499, and K709.

Belongs to the complex I 75 kDa subunit family. As to quaternary structure, core subunit of respiratory chain NADH dehydrogenase (Complex I) which is composed of 45 different subunits. This is the largest subunit of complex I and it is a component of the iron-sulfur (IP) fragment of the enzyme. Complex I associates with ubiquinol-cytochrome reductase complex (Complex III) to form supercomplexes. Interacts with MDM2 and AKAP1. Requires [2Fe-2S] cluster as cofactor. The cofactor is [4Fe-4S] cluster.

Its subcellular location is the mitochondrion inner membrane. The catalysed reaction is a ubiquinone + NADH + 5 H(+)(in) = a ubiquinol + NAD(+) + 4 H(+)(out). In terms of biological role, core subunit of the mitochondrial membrane respiratory chain NADH dehydrogenase (Complex I) which catalyzes electron transfer from NADH through the respiratory chain, using ubiquinone as an electron acceptor. Essential for catalysing the entry and efficient transfer of electrons within complex I. Plays a key role in the assembly and stability of complex I and participates in the association of complex I with ubiquinol-cytochrome reductase complex (Complex III) to form supercomplexes. The polypeptide is NADH-ubiquinone oxidoreductase 75 kDa subunit, mitochondrial (NDUFS1) (Macaca fascicularis (Crab-eating macaque)).